A 901-amino-acid polypeptide reads, in one-letter code: Dipeptidyl-aminopeptidase B (901 aa).

Low complexity predominate over residues 1–22 (MSSPRPSTSSTSSDSGLSVDTT). Positions 1 to 67 (MSSPRPSTSS…EPFLPSAKKQ (67 aa)) are disordered. Over 1–76 (MSSPRPSTSS…QAASGSRTSR (76 aa)) the chain is Cytoplasmic. A helical; Signal-anchor for type II membrane protein membrane pass occupies residues 77 to 97 (LIWGLVILCVAGWLWGLVLFV). At 98–901 (TQNRSAQQSV…VKRSLPMLVN (804 aa)) the chain is on the vacuolar side. Asn-334 and Asn-625 each carry an N-linked (GlcNAc...) asparagine glycan. The active-site Charge relay system is Ser-739. Asn-793 is a glycosylation site (N-linked (GlcNAc...) asparagine). Catalysis depends on charge relay system residues Asp-816 and His-849.

The protein belongs to the peptidase S9B family.

It is found in the vacuole membrane. The catalysed reaction is Release of an N-terminal dipeptide, Xaa-Yaa-|-Zaa-, from a polypeptide, preferentially when Yaa is Pro, provided Zaa is neither Pro nor hydroxyproline.. Type IV dipeptidyl-peptidase which removes N-terminal dipeptides sequentially from polypeptides having unsubstituted N-termini provided that the penultimate residue is proline. This is Dipeptidyl-aminopeptidase B (dapB) from Aspergillus niger.